Reading from the N-terminus, the 202-residue chain is ATP-dependent Clp protease proteolytic subunit 3 (202 aa).

S93 (nucleophile) is an active-site residue. H118 is a catalytic residue.

This sequence belongs to the peptidase S14 family. As to quaternary structure, fourteen ClpP subunits assemble into 2 heptameric rings which stack back to back to give a disk-like structure with a central cavity, resembling the structure of eukaryotic proteasomes.

The protein localises to the cytoplasm. It catalyses the reaction Hydrolysis of proteins to small peptides in the presence of ATP and magnesium. alpha-casein is the usual test substrate. In the absence of ATP, only oligopeptides shorter than five residues are hydrolyzed (such as succinyl-Leu-Tyr-|-NHMec, and Leu-Tyr-Leu-|-Tyr-Trp, in which cleavage of the -Tyr-|-Leu- and -Tyr-|-Trp bonds also occurs).. Cleaves peptides in various proteins in a process that requires ATP hydrolysis. Has a chymotrypsin-like activity. Plays a major role in the degradation of misfolded proteins. The protein is ATP-dependent Clp protease proteolytic subunit 3 of Rhodococcus jostii (strain RHA1).